The following is a 232-amino-acid chain: Small ribosomal subunit protein uS3 (232 aa).

The 69-residue stretch at 39-107 (VRRFLEQRLK…PVHVNIEEVR (69 aa)) folds into the KH type-2 domain.

The protein belongs to the universal ribosomal protein uS3 family. As to quaternary structure, part of the 30S ribosomal subunit. Forms a tight complex with proteins S10 and S14.

Functionally, binds the lower part of the 30S subunit head. Binds mRNA in the 70S ribosome, positioning it for translation. This Chromohalobacter salexigens (strain ATCC BAA-138 / DSM 3043 / CIP 106854 / NCIMB 13768 / 1H11) protein is Small ribosomal subunit protein uS3.